Consider the following 510-residue polypeptide: GMP synthase [glutamine-hydrolyzing] (510 aa).

A Glutamine amidotransferase type-1 domain is found at 5-195 (LVIVVDFGGQ…LYEICKADGD (191 aa)). Residue Cys82 is the Nucleophile of the active site. Residues His169 and Glu171 contribute to the active site. A GMPS ATP-PPase domain is found at 196–385 (WTMENFLEEQ…LEMPEYLVYR (190 aa)). Residue 223 to 229 (SGGVDSS) participates in ATP binding.

In terms of assembly, homodimer.

It catalyses the reaction XMP + L-glutamine + ATP + H2O = GMP + L-glutamate + AMP + diphosphate + 2 H(+). Its pathway is purine metabolism; GMP biosynthesis; GMP from XMP (L-Gln route): step 1/1. Its function is as follows. Catalyzes the synthesis of GMP from XMP. This is GMP synthase [glutamine-hydrolyzing] from Finegoldia magna (strain ATCC 29328 / DSM 20472 / WAL 2508) (Peptostreptococcus magnus).